Reading from the N-terminus, the 481-residue chain is Aspartyl/glutamyl-tRNA(Asn/Gln) amidotransferase subunit B (481 aa).

Belongs to the GatB/GatE family. GatB subfamily. Heterotrimer of A, B and C subunits.

It carries out the reaction L-glutamyl-tRNA(Gln) + L-glutamine + ATP + H2O = L-glutaminyl-tRNA(Gln) + L-glutamate + ADP + phosphate + H(+). The catalysed reaction is L-aspartyl-tRNA(Asn) + L-glutamine + ATP + H2O = L-asparaginyl-tRNA(Asn) + L-glutamate + ADP + phosphate + 2 H(+). Its function is as follows. Allows the formation of correctly charged Asn-tRNA(Asn) or Gln-tRNA(Gln) through the transamidation of misacylated Asp-tRNA(Asn) or Glu-tRNA(Gln) in organisms which lack either or both of asparaginyl-tRNA or glutaminyl-tRNA synthetases. The reaction takes place in the presence of glutamine and ATP through an activated phospho-Asp-tRNA(Asn) or phospho-Glu-tRNA(Gln). This is Aspartyl/glutamyl-tRNA(Asn/Gln) amidotransferase subunit B from Pseudomonas savastanoi pv. phaseolicola (strain 1448A / Race 6) (Pseudomonas syringae pv. phaseolicola (strain 1448A / Race 6)).